Here is a 558-residue protein sequence, read N- to C-terminus: Coiled-coil domain-containing protein 63 (558 aa).

Residues 1 to 26 form a disordered region; that stretch reads MPTKKHRRKDPESPQEPSEKTKEQLV. The segment covering 9–26 has biased composition (basic and acidic residues); it reads KDPESPQEPSEKTKEQLV. Coiled coils occupy residues 48–289 and 339–416; these read NFRS…KAKK and VTEL…VENL. The interval 531-558 is disordered; sequence HYATRESRNRDSMPEKGDELKSKKKVTV. The span at 533–551 shows a compositional bias: basic and acidic residues; the sequence is ATRESRNRDSMPEKGDELK.

Plays a role in spermiogenesis. Involved in the elongation of flagella and the formation of sperm heads. This is Coiled-coil domain-containing protein 63 from Bos taurus (Bovine).